Consider the following 497-residue polypeptide: Galactose/methyl galactoside import ATP-binding protein MglA (497 aa).

ABC transporter domains are found at residues 6–241 (LEIK…VGRS) and 252–497 (VPGE…AKYL). 38-45 (GENGAGKS) is an ATP binding site.

This sequence belongs to the ABC transporter superfamily. Galactose/methyl galactoside importer (TC 3.A.1.2.3) family. The complex is composed of one ATP-binding protein (MglA), two transmembrane proteins (MglC) and a solute-binding protein (MglB).

It localises to the cell inner membrane. The catalysed reaction is D-galactose(out) + ATP + H2O = D-galactose(in) + ADP + phosphate + H(+). It catalyses the reaction methyl beta-D-galactoside(out) + ATP + H2O = methyl beta-D-galactoside(in) + ADP + phosphate + H(+). Part of the ABC transporter complex MglABC involved in galactose/methyl galactoside import. Responsible for energy coupling to the transport system. This is Galactose/methyl galactoside import ATP-binding protein MglA from Treponema denticola (strain ATCC 35405 / DSM 14222 / CIP 103919 / JCM 8153 / KCTC 15104).